We begin with the raw amino-acid sequence, 680 residues long: Cytosolic endo-beta-N-acetylglucosaminidase 1 (680 aa).

Residues 1–15 (MSVAPPAPSPPPFDP) are compositionally biased toward pro residues. Positions 1-21 (MSVAPPAPSPPPFDPTKPSTP) are disordered.

Belongs to the glycosyl hydrolase 85 family.

The protein localises to the cytoplasm. The protein resides in the cytosol. The catalysed reaction is an N(4)-(oligosaccharide-(1-&gt;3)-[oligosaccharide-(1-&gt;6)]-beta-D-Man-(1-&gt;4)-beta-D-GlcNAc-(1-&gt;4)-alpha-D-GlcNAc)-L-asparaginyl-[protein] + H2O = an oligosaccharide-(1-&gt;3)-[oligosaccharide-(1-&gt;6)]-beta-D-Man-(1-&gt;4)-D-GlcNAc + N(4)-(N-acetyl-beta-D-glucosaminyl)-L-asparaginyl-[protein]. Its function is as follows. Endoglycosidase that releases N-glycans from glycoproteins by cleaving the beta-1,4-glycosidic bond in the N,N'-diacetylchitobiose core. Involved in the production of high-mannose type N-glycans during plant development and fruit maturation. The protein is Cytosolic endo-beta-N-acetylglucosaminidase 1 of Arabidopsis thaliana (Mouse-ear cress).